Reading from the N-terminus, the 166-residue chain is Ribosome maturation factor RimP (166 aa).

The protein belongs to the RimP family.

The protein localises to the cytoplasm. Required for maturation of 30S ribosomal subunits. The chain is Ribosome maturation factor RimP from Rickettsia akari (strain Hartford).